Here is a 97-residue protein sequence, read N- to C-terminus: Aspartyl/glutamyl-tRNA(Asn/Gln) amidotransferase subunit C (97 aa).

Belongs to the GatC family. In terms of assembly, heterotrimer of A, B and C subunits.

It catalyses the reaction L-glutamyl-tRNA(Gln) + L-glutamine + ATP + H2O = L-glutaminyl-tRNA(Gln) + L-glutamate + ADP + phosphate + H(+). It carries out the reaction L-aspartyl-tRNA(Asn) + L-glutamine + ATP + H2O = L-asparaginyl-tRNA(Asn) + L-glutamate + ADP + phosphate + 2 H(+). Functionally, allows the formation of correctly charged Asn-tRNA(Asn) or Gln-tRNA(Gln) through the transamidation of misacylated Asp-tRNA(Asn) or Glu-tRNA(Gln) in organisms which lack either or both of asparaginyl-tRNA or glutaminyl-tRNA synthetases. The reaction takes place in the presence of glutamine and ATP through an activated phospho-Asp-tRNA(Asn) or phospho-Glu-tRNA(Gln). In Thermosynechococcus vestitus (strain NIES-2133 / IAM M-273 / BP-1), this protein is Aspartyl/glutamyl-tRNA(Asn/Gln) amidotransferase subunit C.